Here is a 508-residue protein sequence, read N- to C-terminus: Beta-glucosidase 10 (508 aa).

A signal peptide spans 1 to 22; sequence MKLYSLLSVFLVILLATSDSDA. A beta-D-glucoside is bound by residues Gln42, His142, and 187 to 188; that span reads NE. Glu188 (proton donor) is an active-site residue. A disulfide bond links Cys207 and Cys215. N-linked (GlcNAc...) asparagine glycosylation is found at Asn214 and Asn219. An a beta-D-glucoside-binding site is contributed by Tyr331. An N-linked (GlcNAc...) asparagine glycan is attached at Asn365. Glu398 is a binding site for a beta-D-glucoside. Glu398 acts as the Nucleophile in catalysis. A glycan (N-linked (GlcNAc...) asparagine) is linked at Asn431. Trp441 and Phe457 together coordinate a beta-D-glucoside. 3 N-linked (GlcNAc...) asparagine glycosylation sites follow: Asn463, Asn485, and Asn501.

The protein belongs to the glycosyl hydrolase 1 family.

It catalyses the reaction Hydrolysis of terminal, non-reducing beta-D-glucosyl residues with release of beta-D-glucose.. The chain is Beta-glucosidase 10 from Arabidopsis thaliana (Mouse-ear cress).